Here is a 517-residue protein sequence, read N- to C-terminus: Splicing factor U2AF 59 kDa subunit (517 aa).

The span at 1–13 (MDLSSRLSSGSSR) shows a compositional bias: low complexity. The interval 1–112 (MDLSSRLSSG…PSRERSVRSI (112 aa)) is disordered. Residues 20–89 (DYRDEEPRRE…RRYDDYEPRS (70 aa)) show a composition bias toward basic and acidic residues. 2 consecutive RRM domains span residues 310–388 (DKIY…FACV) and 418–509 (RVLQ…FYGE).

The protein belongs to the splicing factor SR family. Forms a heterodimer with the U2AF small subunit. Can also form a homodimer. U2AF large subunit (U2AF59), U2AF small subunit (U2AF23) and SF1 (bpb1) interact to form a complex required for complex A formation. Interacts with wat1/pop3.

It is found in the nucleus. Necessary for the splicing of pre-mRNA. The SF1-U2AF59-U2AF23 complex has a role in the recognition of the branch site (5'-UACUAAC-3'), the pyrimidine tract and the 3'-splice site at the 3'-end of introns. In Schizosaccharomyces pombe (strain 972 / ATCC 24843) (Fission yeast), this protein is Splicing factor U2AF 59 kDa subunit (prp2).